The sequence spans 467 residues: UDP-N-acetylmuramate--L-alanine ligase (467 aa).

Residue 114 to 120 (GTHGKTT) participates in ATP binding.

This sequence belongs to the MurCDEF family.

It is found in the cytoplasm. It catalyses the reaction UDP-N-acetyl-alpha-D-muramate + L-alanine + ATP = UDP-N-acetyl-alpha-D-muramoyl-L-alanine + ADP + phosphate + H(+). Its pathway is cell wall biogenesis; peptidoglycan biosynthesis. Its function is as follows. Cell wall formation. The polypeptide is UDP-N-acetylmuramate--L-alanine ligase (Chlorobium chlorochromatii (strain CaD3)).